Reading from the N-terminus, the 379-residue chain is Anhydro-N-acetylmuramic acid kinase (379 aa).

Residue 12 to 19 (GTSLDGMD) coordinates ATP.

This sequence belongs to the anhydro-N-acetylmuramic acid kinase family.

It carries out the reaction 1,6-anhydro-N-acetyl-beta-muramate + ATP + H2O = N-acetyl-D-muramate 6-phosphate + ADP + H(+). It functions in the pathway amino-sugar metabolism; 1,6-anhydro-N-acetylmuramate degradation. It participates in cell wall biogenesis; peptidoglycan recycling. Its function is as follows. Catalyzes the specific phosphorylation of 1,6-anhydro-N-acetylmuramic acid (anhMurNAc) with the simultaneous cleavage of the 1,6-anhydro ring, generating MurNAc-6-P. Is required for the utilization of anhMurNAc either imported from the medium or derived from its own cell wall murein, and thus plays a role in cell wall recycling. This is Anhydro-N-acetylmuramic acid kinase from Gloeobacter violaceus (strain ATCC 29082 / PCC 7421).